The sequence spans 263 residues: UPF0758 protein NGR_c13970 (263 aa).

The MPN domain maps to 141 to 263 (VLSSWSAVID…HVSMKGLRLF (123 aa)). H212, H214, and D225 together coordinate Zn(2+). Positions 212–225 (HNHPSGDPTPSRAD) match the JAMM motif motif.

This sequence belongs to the UPF0758 family.

This is UPF0758 protein NGR_c13970 from Sinorhizobium fredii (strain NBRC 101917 / NGR234).